The chain runs to 727 residues: MAPPAKRARRGLVPPGYKYLGPGNSLDQGEPTNPSDAAAKEHDEAYAAYLRSGKNPYLYFSPADQRFIDQTKDATDWGGKIGHYFFRAKKAIAPVLTDTPDHPSTSRPTKPTKRSKPPPHIFINLAKKKKAGAGQVKRDNQAPMSDGAVQPDGGQPAVRNERATGSGNGSGGGGGGGSGGVGISTGTFNNQTEFKFLENGWVEITANSSRLVHLNMPESENYKRVVVNNMDKTAVKGNMALDDTHVQIVTPWSLVDANAWGVWFNPGDWQLIVNTMSELHLVSFEQEIFNVVLKTVSESATQPPTKVYNNDLTASLMVALDSNNTMPFTPAAMRSETLGFYPWKPTIPTPWRYYFQWDRTLIPSHTGTSGTPTNIYHGTDPDDVQFYTIENSVPVHLLRTGDEFATGTFFFDCKPCRLTHTWQTNRALGLPPFLNSLPQSEGATNFGDIGVQQDKRRGVTQMGNTDYITEATIMRPAEVGYSAPYYSFEASTQGPFKIPIAAGRGGAQTDENQAADGDPRYAFGRQHGQKTTTTGETPERFTYIAHQDTGRYPAGDWIQNINFNLPVTNDNVLLPTDPIGGKTGINYTNIFNTYGPLTALNNVPPVYPNGQIWDKEFDTDLKPRLHVNAPFVCQNNCPGQLFVKVAPNLTNEYDPDASANMSRIVTYSDFWWKGKLVFKAKLRASHTWNPIQQMSINVDNQFNYLPNNIGAMKIVYEKSQLAPRKLY.

Residues 1–10 show a composition bias toward basic residues; the sequence is MAPPAKRARR. Disordered regions lie at residues 1-38 and 95-184; these read MAPPAKRARRGLVPPGYKYLGPGNSLDQGEPTNPSDAA and VLTD…VGIS. The short motif at 4–13 is the Nuclear localization signal element; the sequence is PAKRARRGLV. The interval 19-64 is phospholipase A2-like; the sequence is YLGPGNSLDQGEPTNPSDAAAKEHDEAYAAYLRSGKNPYLYFSPAD. Residues 25-35 are compositionally biased toward polar residues; the sequence is SLDQGEPTNPS. The span at 166–183 shows a compositional bias: gly residues; it reads SGNGSGGGGGGGSGGVGI. N323 is a Mg(2+) binding site. Residues 507 to 536 are disordered; that stretch reads AQTDENQAADGDPRYAFGRQHGQKTTTTGE. C633 and C637 form a disulfide bridge.

The protein belongs to the parvoviridae capsid protein family. As to quaternary structure, interacts with host TFRC.

It localises to the virion. The protein resides in the host nucleus. In terms of biological role, capsid protein self-assembles to form an icosahedral capsid with a T=1 symmetry, about 22 nm in diameter, and consisting of 60 copies of two size variants of the capsid proteins, VP1 and VP2, which differ by the presence of an N-terminal extension in the minor protein VP1. The capsid encapsulates the genomic ssDNA. Capsid proteins are responsible for the attachment to host cell receptor TFRC. This attachment induces virion internalization predominantly through clathrin-dependent endocytosis. Binding to the host receptors also induces capsid rearrangements leading to surface exposure of VP1 N-terminus. This is Capsid protein VP1 from Feline panleukopenia virus (FPV).